Reading from the N-terminus, the 288-residue chain is Shikimate kinase (288 aa).

81-91 (PVASGLKSSSA) contributes to the ATP binding site.

It belongs to the GHMP kinase family. Archaeal shikimate kinase subfamily.

The protein localises to the cytoplasm. The enzyme catalyses shikimate + ATP = 3-phosphoshikimate + ADP + H(+). Its pathway is metabolic intermediate biosynthesis; chorismate biosynthesis; chorismate from D-erythrose 4-phosphate and phosphoenolpyruvate: step 5/7. This Methanothrix thermoacetophila (strain DSM 6194 / JCM 14653 / NBRC 101360 / PT) (Methanosaeta thermophila) protein is Shikimate kinase.